Here is a 225-residue protein sequence, read N- to C-terminus: Ribonuclease 3 (225 aa).

The region spanning 5–127 (MNKLTSKLGY…IIGAIYLDSD (123 aa)) is the RNase III domain. E40 lines the Mg(2+) pocket. D44 is an active-site residue. 2 residues coordinate Mg(2+): D113 and E116. E116 is a catalytic residue. The DRBM domain occupies 154–224 (DPKTRLQEFL…AETALEQLTN (71 aa)).

Belongs to the ribonuclease III family. In terms of assembly, homodimer. It depends on Mg(2+) as a cofactor.

The protein resides in the cytoplasm. The enzyme catalyses Endonucleolytic cleavage to 5'-phosphomonoester.. Functionally, digests double-stranded RNA. Involved in the processing of primary rRNA transcript to yield the immediate precursors to the large and small rRNAs (23S and 16S). Processes some mRNAs, and tRNAs when they are encoded in the rRNA operon. Processes pre-crRNA and tracrRNA of type II CRISPR loci if present in the organism. This chain is Ribonuclease 3, found in Vibrio cholerae serotype O1 (strain ATCC 39315 / El Tor Inaba N16961).